The sequence spans 115 residues: U2-ctenitoxin-Pn1b (115 aa).

Residues 1–17 form the signal peptide; that stretch reads MKVAVIILSILVLAAAS. Residues 18-61 constitute a propeptide that is removed on maturation; sequence ESIEEYREDFSRPNAMERSANDWIPTAPSAVERSADFAVEELER. Cystine bridges form between Cys64–Cys78, Cys71–Cys84, Cys75–Cys113, Cys77–Cys98, and Cys86–Cys96. Residue Lys115 is a propeptide.

It belongs to the neurotoxin 03 (Tx2) family. 04 subfamily. Expressed by the venom gland.

Its subcellular location is the secreted. In terms of biological role, blocks voltage-gated sodium channels (Nav). The chain is U2-ctenitoxin-Pn1b from Phoneutria nigriventer (Brazilian armed spider).